Consider the following 165-residue polypeptide: Shikimate kinase (165 aa).

12-17 is a binding site for ATP; the sequence is GCGKST. Serine 16 provides a ligand contact to Mg(2+). Aspartate 34, arginine 57, and glycine 79 together coordinate substrate. Arginine 116 is an ATP binding site. Residue arginine 133 participates in substrate binding.

It belongs to the shikimate kinase family. Monomer. The cofactor is Mg(2+).

The protein localises to the cytoplasm. It carries out the reaction shikimate + ATP = 3-phosphoshikimate + ADP + H(+). It participates in metabolic intermediate biosynthesis; chorismate biosynthesis; chorismate from D-erythrose 4-phosphate and phosphoenolpyruvate: step 5/7. Its function is as follows. Catalyzes the specific phosphorylation of the 3-hydroxyl group of shikimic acid using ATP as a cosubstrate. In Clostridium botulinum (strain Alaska E43 / Type E3), this protein is Shikimate kinase.